Here is a 203-residue protein sequence, read N- to C-terminus: Protein GrpE (203 aa).

Residues 1 to 10 (MSNESIKAEQ) are compositionally biased toward basic and acidic residues. Positions 1–20 (MSNESIKAEQDLIQEGVESE) are disordered.

The protein belongs to the GrpE family. Homodimer.

The protein localises to the cytoplasm. Its function is as follows. Participates actively in the response to hyperosmotic and heat shock by preventing the aggregation of stress-denatured proteins, in association with DnaK and GrpE. It is the nucleotide exchange factor for DnaK and may function as a thermosensor. Unfolded proteins bind initially to DnaJ; upon interaction with the DnaJ-bound protein, DnaK hydrolyzes its bound ATP, resulting in the formation of a stable complex. GrpE releases ADP from DnaK; ATP binding to DnaK triggers the release of the substrate protein, thus completing the reaction cycle. Several rounds of ATP-dependent interactions between DnaJ, DnaK and GrpE are required for fully efficient folding. The protein is Protein GrpE of Shewanella sp. (strain MR-7).